A 94-amino-acid polypeptide reads, in one-letter code: DNA-directed RNA polymerase subunit Rpo11 (94 aa).

It belongs to the archaeal Rpo11/eukaryotic RPB11/RPC19 RNA polymerase subunit family. Part of the RNA polymerase complex.

It localises to the cytoplasm. The enzyme catalyses RNA(n) + a ribonucleoside 5'-triphosphate = RNA(n+1) + diphosphate. Functionally, DNA-dependent RNA polymerase (RNAP) catalyzes the transcription of DNA into RNA using the four ribonucleoside triphosphates as substrates. The chain is DNA-directed RNA polymerase subunit Rpo11 from Natronomonas pharaonis (strain ATCC 35678 / DSM 2160 / CIP 103997 / JCM 8858 / NBRC 14720 / NCIMB 2260 / Gabara) (Halobacterium pharaonis).